Consider the following 344-residue polypeptide: Glyceraldehyde-3-phosphate dehydrogenase (344 aa).

Residues 11-12 and Gly110 each bind NAD(+); that span reads TI. 139 to 141 contacts D-glyceraldehyde 3-phosphate; the sequence is SCN. The Nucleophile role is filled by Cys140. Residue Arg169 coordinates NAD(+). Residue 195–196 coordinates D-glyceraldehyde 3-phosphate; sequence HG. NAD(+) is bound at residue Gln302.

This sequence belongs to the glyceraldehyde-3-phosphate dehydrogenase family. As to quaternary structure, homotetramer.

It localises to the cytoplasm. It catalyses the reaction D-glyceraldehyde 3-phosphate + phosphate + NADP(+) = (2R)-3-phospho-glyceroyl phosphate + NADPH + H(+). It carries out the reaction D-glyceraldehyde 3-phosphate + phosphate + NAD(+) = (2R)-3-phospho-glyceroyl phosphate + NADH + H(+). It participates in carbohydrate degradation; glycolysis; pyruvate from D-glyceraldehyde 3-phosphate: step 1/5. The polypeptide is Glyceraldehyde-3-phosphate dehydrogenase (Pyrobaculum islandicum (strain DSM 4184 / JCM 9189 / GEO3)).